The sequence spans 290 residues: MEFEAEHEGLTASWVAPAPQGGKGAEGRAGVADEAGHGKTEAECAEDGEKCGDAEMSALDRVQRDRWRFSSPPPHSGVTGKGAIPIKGDGKAIECQELTGEGEWLSQWEELPPEPRRSGNEHLDESRYAKQTERGSSTGKEEGDGMKQMGELAQQCEGGTYADLLVEAEQAVVHSVRALMLAERQNPNILGEHLNKKRVLVQRPRTILSVESENATMRSYMLVTLICSAKSLLLGSCMSFFAGMLVGRTADVKTPLWDTVCLLMAFCAGIVVGGVDSGEVESGETKSESN.

Disordered stretches follow at residues methionine 1–glutamate 49, tryptophan 67–lysine 87, and leucine 111–methionine 146. The span at glutamate 34–glutamate 49 shows a compositional bias: basic and acidic residues. A compositionally biased stretch (basic and acidic residues) spans proline 113–glycine 145. The next 2 membrane-spanning stretches (helical) occupy residues isoleucine 226–valine 246 and proline 255–valine 275.

Phosphorylated.

The protein localises to the membrane. This chain is 38 kDa phosphoprotein (PP38), found in Gallus gallus (Chicken).